A 137-amino-acid chain; its full sequence is Holo-[acyl-carrier-protein] synthase (137 aa).

D8 and E57 together coordinate Mg(2+).

This sequence belongs to the P-Pant transferase superfamily. AcpS family. Requires Mg(2+) as cofactor.

The protein localises to the cytoplasm. It carries out the reaction apo-[ACP] + CoA = holo-[ACP] + adenosine 3',5'-bisphosphate + H(+). Transfers the 4'-phosphopantetheine moiety from coenzyme A to a Ser of acyl-carrier-protein. The sequence is that of Holo-[acyl-carrier-protein] synthase from Mesorhizobium japonicum (strain LMG 29417 / CECT 9101 / MAFF 303099) (Mesorhizobium loti (strain MAFF 303099)).